The following is a 396-amino-acid chain: Ornithine aminotransferase (396 aa).

At K255 the chain carries N6-(pyridoxal phosphate)lysine.

Belongs to the class-III pyridoxal-phosphate-dependent aminotransferase family. OAT subfamily. Pyridoxal 5'-phosphate serves as cofactor.

It is found in the cytoplasm. The enzyme catalyses a 2-oxocarboxylate + L-ornithine = L-glutamate 5-semialdehyde + an L-alpha-amino acid. The protein operates within amino-acid biosynthesis; L-proline biosynthesis; L-glutamate 5-semialdehyde from L-ornithine: step 1/1. Its function is as follows. Catalyzes the interconversion of ornithine to glutamate semialdehyde. This Bacillus cereus (strain Q1) protein is Ornithine aminotransferase.